The chain runs to 244 residues: 7-cyano-7-deazaguanine synthase (244 aa).

17–27 (FSGGQDSTTCL) contacts ATP. 4 residues coordinate Zn(2+): cysteine 205, cysteine 220, cysteine 223, and cysteine 226.

The protein belongs to the QueC family. Requires Zn(2+) as cofactor.

It carries out the reaction 7-carboxy-7-deazaguanine + NH4(+) + ATP = 7-cyano-7-deazaguanine + ADP + phosphate + H2O + H(+). The protein operates within purine metabolism; 7-cyano-7-deazaguanine biosynthesis. Catalyzes the ATP-dependent conversion of 7-carboxy-7-deazaguanine (CDG) to 7-cyano-7-deazaguanine (preQ(0)). This Bordetella pertussis (strain Tohama I / ATCC BAA-589 / NCTC 13251) protein is 7-cyano-7-deazaguanine synthase.